A 299-amino-acid chain; its full sequence is Pyridoxal 5'-phosphate synthase subunit PdxS (299 aa).

Residue aspartate 24 coordinates D-ribose 5-phosphate. The Schiff-base intermediate with D-ribose 5-phosphate role is filled by lysine 81. Position 153 (glycine 153) interacts with D-ribose 5-phosphate. Arginine 165 provides a ligand contact to D-glyceraldehyde 3-phosphate. D-ribose 5-phosphate-binding positions include glycine 219 and 240–241 (GS).

Belongs to the PdxS/SNZ family. As to quaternary structure, in the presence of PdxT, forms a dodecamer of heterodimers.

The enzyme catalyses aldehydo-D-ribose 5-phosphate + D-glyceraldehyde 3-phosphate + L-glutamine = pyridoxal 5'-phosphate + L-glutamate + phosphate + 3 H2O + H(+). The protein operates within cofactor biosynthesis; pyridoxal 5'-phosphate biosynthesis. In terms of biological role, catalyzes the formation of pyridoxal 5'-phosphate from ribose 5-phosphate (RBP), glyceraldehyde 3-phosphate (G3P) and ammonia. The ammonia is provided by the PdxT subunit. Can also use ribulose 5-phosphate and dihydroxyacetone phosphate as substrates, resulting from enzyme-catalyzed isomerization of RBP and G3P, respectively. The polypeptide is Pyridoxal 5'-phosphate synthase subunit PdxS (Methanococcus aeolicus (strain ATCC BAA-1280 / DSM 17508 / OCM 812 / Nankai-3)).